The following is a 364-amino-acid chain: Doublecortin domain-containing protein 2C (364 aa).

Doublecortin domains lie at 16 to 98 and 136 to 217; these read KTIV…LDYI and RHIN…FPYW. The tract at residues 233–255 is disordered; it reads VEKNSQRKKKVDSKGKEPCKYDG.

In terms of tissue distribution, expressed in testis and spermatozoa (at protein level).

The protein resides in the cell projection. It is found in the cilium. The protein localises to the flagellum. It localises to the cytoplasm. In Homo sapiens (Human), this protein is Doublecortin domain-containing protein 2C.